A 597-amino-acid polypeptide reads, in one-letter code: MCGIVGYIGDSEKKSILLEGLKELEYRGYDSAGLAVLSANRLEVFKTQGKLENLRTELKNKEFLNFGVSIAHTRWATHGKPSSANAHPHFTENLALVHNGIIENYASLKKELENKGHAFLSQTDTEVIAHLLEETLKSEGDLLKAFEKSISLLKGSYAILMLHKRAKESLFYAKSSSPLIVGKGKEGVFFASSLSVLAPKVDQFVILEENSVGQISLENFKDLNNIENMKDYAFENKDYSKGNFRNYLEKEIYEQHSSLLECLEGRLEALSVYCEIDPEFLENVSEITLCSCGSSYHASLASVYLFERLAKIRARAILASEYRYAHFKSNPNELFIAISQSGETADTLEALKLAKAQGLKTISLCNAPFSMMSRISDHTLLIRAGVERSVASTKAFSSQVMLLWLLSVYLGKQLGTISKEEERIQAKNMLNSVKAMKVEPKLHEKIKRLSKRYLHGHGFFYIGRDVFYPLALEGALKLKEISYLHAEGYASAEMKHGPIALVDSNLFTIALLSKHLLFDKTKSNIEELSARDSTICVLSSEILEIADDFIQLEESESYMEEFFRMNLAMQLLALEIAMRLNHDVDHPRNLAKSVTVE.

Cys-2 (nucleophile; for GATase activity) is an active-site residue. Residues 2–218 (CGIVGYIGDS…ENSVGQISLE (217 aa)) form the Glutamine amidotransferase type-2 domain. 2 consecutive SIS domains span residues 276–416 (IDPE…QLGT) and 449–587 (LSKR…VDHP). Lys-592 serves as the catalytic For Fru-6P isomerization activity.

Homodimer.

Its subcellular location is the cytoplasm. It catalyses the reaction D-fructose 6-phosphate + L-glutamine = D-glucosamine 6-phosphate + L-glutamate. In terms of biological role, catalyzes the first step in hexosamine metabolism, converting fructose-6P into glucosamine-6P using glutamine as a nitrogen source. This is Glutamine--fructose-6-phosphate aminotransferase [isomerizing] from Helicobacter pylori (strain J99 / ATCC 700824) (Campylobacter pylori J99).